A 396-amino-acid chain; its full sequence is Aspartate aminotransferase (396 aa).

Residues G34, W130, and N183 each coordinate L-aspartate. N6-(pyridoxal phosphate)lysine is present on K246. L-aspartate is bound at residue R374.

This sequence belongs to the class-I pyridoxal-phosphate-dependent aminotransferase family. In terms of assembly, homodimer. Requires pyridoxal 5'-phosphate as cofactor.

The protein localises to the cytoplasm. It catalyses the reaction L-aspartate + 2-oxoglutarate = oxaloacetate + L-glutamate. The sequence is that of Aspartate aminotransferase (aspC) from Escherichia coli (strain K12).